We begin with the raw amino-acid sequence, 145 residues long: Acidic phospholipase A2 S1-11 (145 aa).

Positions 1 to 19 (MYPAHLLVLLAVCVSLLGA) are cleaved as a signal peptide. Residues 20–27 (SDMPPQPL) constitute a propeptide that is removed on maturation. Cystine bridges form between C38–C99, C54–C144, C56–C72, C71–C127, and C106–C118. 3 residues coordinate Ca(2+): Y55, G57, and G59. H75 is an active-site residue. D76 is a Ca(2+) binding site. Residue D121 is part of the active site.

Belongs to the phospholipase A2 family. Group I subfamily. D49 sub-subfamily. The cofactor is Ca(2+). In terms of processing, this enzyme lacks two of the seven disulfide bonds found in similar PLA2 proteins. In terms of tissue distribution, expressed by the venom gland.

Its subcellular location is the secreted. The catalysed reaction is a 1,2-diacyl-sn-glycero-3-phosphocholine + H2O = a 1-acyl-sn-glycero-3-phosphocholine + a fatty acid + H(+). Its function is as follows. Snake venom phospholipase A2 (PLA2) that inhibits collagen-induced platelet aggregation. PLA2 catalyzes the calcium-dependent hydrolysis of the 2-acyl groups in 3-sn-phosphoglycerides. The chain is Acidic phospholipase A2 S1-11 from Austrelaps superbus (Lowland copperhead snake).